A 132-amino-acid chain; its full sequence is SH2 domain-containing protein 1B (132 aa).

The SH2 domain maps to 5-101 (YYHGRLTKQD…GMVVHLLKPI (97 aa)). The residue at position 127 (Tyr127) is a Phosphotyrosine.

Binds to the phosphorylated receptors CD84, SLAMF1, LY9 and CD244. Does not bind to non-phosphorylated SLAMF1. Interacts with SLAMF7 (via ITSM phosphorylated on 'Tyr-304'). Interacts with Src kinases HCK, LYN, FYN, FGR and LCK (via kinase domains). Interacts (phosphorylated at Tyr-127) with PLCG1.

In terms of biological role, cytoplasmic adapter regulating receptors of the signaling lymphocytic activation molecule (SLAM) family such as CD84, SLAMF1, LY9 and CD244. In SLAM signaling seems to cooperate with SH2D1A/SAP. Plays a role in regulation of effector functions of natural killer (NK) cells by controlling signal transduction through CD244/2B4 without effecting its tyrosine phosphorylation; downstream signaling involves PLCG1 and ERK activation. Activation of SLAMF7-mediated NK cell function does not effect receptor tyrosine phosphorylation but distal signaling. In the context of NK cell-mediated cytotoxicity does not enhance conjugate formation with target cells but stimulates polarization of the microtubule-organizing center and cytotoxic granules toward the NK cell synapse. Negatively regulates CD40-induced cytokine production in dendritic cells downstream of SLAM family receptors probably by inducing activation of the PI3K pathway to inhibit p38 MAPK and JNK activation. This chain is SH2 domain-containing protein 1B (SH2D1B), found in Homo sapiens (Human).